The sequence spans 945 residues: Leucine--tRNA ligase 1 (945 aa).

A 'HIGH' region motif is present at residues 42–52; that stretch reads PYTNSPLHIGH. Positions 625 to 629 match the 'KMSKS' region motif; it reads KMSKS. Lysine 628 contacts ATP.

The protein belongs to the class-I aminoacyl-tRNA synthetase family.

The protein localises to the cytoplasm. It carries out the reaction tRNA(Leu) + L-leucine + ATP = L-leucyl-tRNA(Leu) + AMP + diphosphate. The polypeptide is Leucine--tRNA ligase 1 (Sulfurisphaera tokodaii (strain DSM 16993 / JCM 10545 / NBRC 100140 / 7) (Sulfolobus tokodaii)).